The primary structure comprises 848 residues: MQEVSNHTPMIQQYLKIKSQYPDILLFYRMGDFYELFFDDAKNAAELLDITLTARGKSNGDSIPMAGVPYHAAEGYIAKIVKKGLSVAICEQIGDPSTSKGPVERQVTRIITPATVSEEAFLDSNQDSILVSIYEKNNKYHIAYTSYTQGKIHLINTVTNSSDLKNQILKLSPQEIITNSNSLVEKNIFNKPVKVLEEWYFSNFEAKKHILNSFDNSFANNILNLYKKEQLTVIGSILAYLTNTLKSTPKHISDILLDEDQNILNIDINSRNNLELDNNSKSSLLNIMDKCKTSLGSRLLRRYFKNPTRDLNKISLRHNVIKSFKQHHYFLKIQDILSYINDIERIISRVALGTVKPKDLVSLNSSLEQLPKLKSLLEKINTSEIININNHIHQIDELTKLLNKAIVDNPPMTIRDGGVIKHGFDQELDELRGLKDNSYDFLLKFETLQKQKTGINTLKVGYNRVHGYYIELSKQYADKVPTEYIRRQTLKASERYITDELKAFEDKILSAKEKALAREKLIYDTLLNKVLEYYSQIQQTAASIAKIDVLANFAERAIKLNLNQPKFNKTGKLDIKEARHLAIEQNIDEPFIPNDTLLSTDTYTLEIITGPNMGGKSTYMRQVAQLIFLAYIGSFVPASYADIGDIDTIYTRIGASDDISSGRSTFMVEMTETAYILNNATKKSLVIMDEIGRGTSTFDGLSLAKACAEKFAKIGAMTLFATHYFELTELVNQYPNTKNIHFEAKEYKDNIYFMHKAVAGAAKKSYGIQVAKLAGISKDVLDSAKKNLANLEKGQDKLDTIDQPQQNLQLDQTPQKNHIKERLETIDINSITPIEALNILFELKKTLI.

ATP is bound at residue 610 to 617 (GPNMGGKS).

Belongs to the DNA mismatch repair MutS family.

In terms of biological role, this protein is involved in the repair of mismatches in DNA. It is possible that it carries out the mismatch recognition step. This protein has a weak ATPase activity. This is DNA mismatch repair protein MutS from Francisella philomiragia subsp. philomiragia (strain ATCC 25017 / CCUG 19701 / FSC 153 / O#319-036).